The primary structure comprises 107 residues: Early E3A 12.5 kDa protein (107 aa).

The protein belongs to the adenoviridae E3A-2 family.

The chain is Early E3A 12.5 kDa protein from Homo sapiens (Human).